A 300-amino-acid chain; its full sequence is Free fatty acid receptor 1 (300 aa).

The Extracellular portion of the chain corresponds to Met1 to Ser8. Residues Phe9–Val31 form a helical membrane-spanning segment. Topologically, residues Ser32–Ser41 are cytoplasmic. Residues Leu42 to Val64 form a helical membrane-spanning segment. The Extracellular portion of the chain corresponds to Glu65–Cys79. Cys79 and Cys170 are joined by a disulfide. The helical transmembrane segment at Pro80–Ser101 threads the bilayer. The Cytoplasmic segment spans residues Ala102–Arg121. Residues Tyr122–Leu142 traverse the membrane as a helical segment. Over Gly143–Ser178 the chain is Extracellular. Asn153 is a glycosylation site (N-linked (GlcNAc...) asparagine). Residues Ala179–Phe200 traverse the membrane as a helical segment. Over Cys201–Ala223 the chain is Cytoplasmic. Residues Trp224–Phe248 traverse the membrane as a helical segment. The Extracellular portion of the chain corresponds to Ile249 to Ser256. Residues Trp257–Leu279 form a helical membrane-spanning segment. The Cytoplasmic portion of the chain corresponds to Gly280 to Lys300.

It belongs to the G-protein coupled receptor 1 family. In terms of tissue distribution, expressed in pancreatic islet beta cells (at protein level). Expressed in pancreatic islet beta cells.

The protein resides in the cell membrane. Its activity is regulated as follows. Is also activated by synthetic agonists, such as AM-8182, AM-6331 and TAK-875 (fasiglifam). AM-8182 is a full agonist, while AM-6331 and TAK-875 (fasiglifam) are partial agonists that potentiate the activity of the endogenous ligands, such as alpha-linolenic acid and gamma-linolenic acid. Functionally, G-protein coupled receptor for medium and long chain saturated and unsaturated fatty acids that plays an important role in glucose homeostasis. Fatty acid binding increases glucose-stimulated insulin secretion, and may also enhance the secretion of glucagon-like peptide 1 (GLP-1). May also play a role in bone homeostasis; receptor signaling activates pathways that inhibit osteoclast differentiation. Ligand binding leads to a conformation change that triggers signaling via G-proteins that activate phospholipase C, leading to an increase of the intracellular calcium concentration. Seems to act through a G(q) and G(i)-mediated pathway. Mediates the anti-inflammatory effects of omega-3 polyunsaturated fatty acids (PUFAs) via inhibition of NLRP3 inflammasome activation. The sequence is that of Free fatty acid receptor 1 (Ffar1) from Mus musculus (Mouse).